The following is a 322-amino-acid chain: HPr kinase/phosphorylase (322 aa).

Catalysis depends on residues His-146 and Lys-167. Residue 161–168 (GDSGLGKS) coordinates ATP. Ser-168 contacts Mg(2+). Asp-185 serves as the catalytic Proton acceptor; for phosphorylation activity. Proton donor; for dephosphorylation activity. Positions 209–218 (LEVRGLGLLD) are important for the catalytic mechanism of both phosphorylation and dephosphorylation. A Mg(2+)-binding site is contributed by Glu-210. Arg-250 is a catalytic residue. The interval 271–276 (QVAAGR) is important for the catalytic mechanism of dephosphorylation.

It belongs to the HPrK/P family. As to quaternary structure, homohexamer. Mg(2+) is required as a cofactor.

The enzyme catalyses [HPr protein]-L-serine + ATP = [HPr protein]-O-phospho-L-serine + ADP + H(+). It catalyses the reaction [HPr protein]-O-phospho-L-serine + phosphate + H(+) = [HPr protein]-L-serine + diphosphate. Its function is as follows. Catalyzes the ATP- as well as the pyrophosphate-dependent phosphorylation of a specific serine residue in HPr, a phosphocarrier protein of the phosphoenolpyruvate-dependent sugar phosphotransferase system (PTS). HprK/P also catalyzes the pyrophosphate-producing, inorganic phosphate-dependent dephosphorylation (phosphorolysis) of seryl-phosphorylated HPr (P-Ser-HPr). This is HPr kinase/phosphorylase from Burkholderia cenocepacia (strain HI2424).